We begin with the raw amino-acid sequence, 622 residues long: Coiled-coil domain-containing protein 17 (622 aa).

Coiled coils occupy residues 81-102, 146-207, and 294-320; these read RSAL…QEMR, ARRV…LEVL, and GELP…RGRA. 2 disordered regions span residues 334 to 356 and 584 to 622; these read SLQP…PLPP and PAVG…PVSF. Over residues 344 to 356 the composition is skewed to pro residues; that stretch reads PLLPPPVAPPLPP. Residues 593-615 show a composition bias toward basic and acidic residues; sequence PRTEEPLSGVKDRDEGLGPHHSS.

The protein is Coiled-coil domain-containing protein 17 (CCDC17) of Homo sapiens (Human).